Consider the following 865-residue polypeptide: Aconitate hydratase B (865 aa).

Residues arginine 191, 244–246, 414–416, and serine 498 each bind substrate; these read SSR and QDT. Positions 710, 769, and 772 each coordinate [4Fe-4S] cluster. Positions 791 and 796 each coordinate substrate.

The protein belongs to the aconitase/IPM isomerase family. In terms of assembly, monomer. AcnB can also form a homodimer. The monomer-homodimer transition is dependent on iron availability and the carboxymethylation of C-273 inhibits the dimer formation. It depends on [4Fe-4S] cluster as a cofactor.

It carries out the reaction citrate = D-threo-isocitrate. The catalysed reaction is (2S,3R)-3-hydroxybutane-1,2,3-tricarboxylate = 2-methyl-cis-aconitate + H2O. Its pathway is organic acid metabolism; propanoate degradation. It functions in the pathway carbohydrate metabolism; tricarboxylic acid cycle; isocitrate from oxaloacetate: step 2/2. In terms of biological role, involved in the catabolism of short chain fatty acids (SCFA) via the tricarboxylic acid (TCA)(acetyl degradation route) and the 2-methylcitrate cycle I (propionate degradation route). Catalyzes the reversible isomerization of citrate to isocitrate via cis-aconitate. Also catalyzes the hydration of 2-methyl-cis-aconitate to yield (2R,3S)-2-methylisocitrate. The apo form of AcnB functions as a RNA-binding regulatory protein. During oxidative stress inactive AcnB apo-enzyme without iron sulfur clusters binds the acnB mRNA 3' UTRs (untranslated regions), stabilizes acnB mRNA and increases AcnB synthesis, thus mediating a post-transcriptional positive autoregulatory switch. AcnB also decreases the stability of the sodA transcript. The polypeptide is Aconitate hydratase B (Escherichia coli (strain K12)).